The following is a 148-amino-acid chain: UPF0591 membrane protein C15E1.02c (148 aa).

The next 3 helical transmembrane spans lie at 14–34, 80–102, and 122–142; these read AILLGIAFDHAASFLVYGPLM, LLQLTGTVTLKGAFFVGLYVFGA, and ILVKTISSLVKSVGLSVALIG.

This sequence belongs to the UPF0591 family.

Its subcellular location is the membrane. This is UPF0591 membrane protein C15E1.02c from Schizosaccharomyces pombe (strain 972 / ATCC 24843) (Fission yeast).